Reading from the N-terminus, the 600-residue chain is Kelch-like protein 24 (600 aa).

One can recognise a BTB domain in the interval 66–133; the sequence is TDVIICVEGK…VYTGKVKITT (68 aa). A BACK domain is found at 168–270; sequence CLGIQRFADT…HPNYFVQTVE (103 aa). Kelch repeat units follow at residues 314–363, 365–407, 408–454, 456–502, 504–544, and 546–592; these read VIVV…ALRN, ILVS…VLLG, KVYV…SCIG, LFVI…SLNN, IYVA…VCNG, and IYIL…TIHR.

In terms of assembly, forms homodimers. Interacts with GRIK2. Component of the BCR(KLHL24) E3 ubiquitin ligase complex, composed of CUL3, RBX1 and KLHL24. Interacts with CUL3. Interacts with KRT14. In terms of processing, autoubiquitinated. Autoubiquitination leads to proteasomal degradation and is necessary to control KLHL24 levels. In terms of tissue distribution, expressed in the brain.

The protein resides in the perikaryon. It localises to the cell projection. It is found in the axon. Its subcellular location is the cytoplasm. The protein localises to the cell junction. The protein resides in the desmosome. It localises to the adherens junction. Controls KRT14 levels during keratinocytes differentiation. As part of the BCR(KLHL24) E3 ubiquitin ligase complex, mediates ubiquitination of KRT14. Specifically reduces kainate receptor-mediated currents in hippocampal neurons, most probably by modulating channel properties. Has a crucial role in cardiac development and function. This Mus musculus (Mouse) protein is Kelch-like protein 24 (Klhl24).